The sequence spans 95 residues: ESAT-6-like protein EsxC (95 aa).

The protein belongs to the WXG100 family. ESAT-6 subfamily.

It is found in the secreted. The chain is ESAT-6-like protein EsxC from Mycobacterium tuberculosis (strain CDC 1551 / Oshkosh).